Consider the following 951-residue polypeptide: MGGLEEIKNEAVDLENIPIEEVFEQLKCTREGLSSEEGNRRIEMFGPNKLEEKKESKILKFLGFMWNPLSWVMEMAAIMAIALANGGGKPPDWEDFVGIIVLLVINSTISFIEENNAGNAAAALMANLAPKTKVLRDGRWGEQEAAILVPGDIISIKLGDIVPADARLLEGDPLKIDQSALTGESLPVTKNPGDEVFSGSTCKQGEIEAVVIATGVHTFFGKAAHLVDSTNQVGHFQTVLTAIGNFCICSIAVGIVIEIIVMFPIQHRAYRSGIENLLVLLIGGIPIAMPTVLSVTMAIGSHKLSQQGAITKRMTAIEEMAGMDVLCSDKTGTLTLNKLSVDKNLVEVFTKGVDKDHVLLLAARASRTENQDAIDAAMVGMLADPKEARAGIREVHFLPFNPVDKRTALTYIDADGNWHRASKGAPEQILTLCNCKEDVKRKVHAVIDKYAERGLRSLAVARQEVPEKSKESAGGPWQFVGLLPLFDPPRHDSAETIRKALHLGVNVKMITGDQLAIGKETGRRLGMGTNMYPSSALLGQNKDASLEALPVDELIEKADGFAGVFPEHKYEIVKRLQEKKHIVGMTGDGVNDAPALKKADIGIAVADATDAARSASDIVLTEPGLSVIISAVLTSRCIFQRMKNYTIYAVSITIRIVLGFLLIALIWKYDFSPFMVLIIAILNDGTIMTISKDRVKPSPLPDSWKLKEIFATGIVLGSYLALMTVIFFWAMHKTDFFTDKFGVRSIRNSEHEMMSALYLQVSIVSQALIFVTRSRSWSFIERPGLLLVTAFMLAQLVATFLAVYANWGFARIKGIGWGWAGVIWLYSIVFYFPLDIFKFFIRFVLSGRAWDNLLENKIAFTTKKDYGREEREAQWATAQRTLHGLQPPEVASNTLFNDKSSYRELSEIAEQAKRRAEIARLRELNTLKGHVESVVKLKGLDIDTIQQNYTV.

A run of 4 helical transmembrane segments spans residues 61–81, 93–113, 243–263, and 277–297; these read FLGF…IMAI, WEDF…SFIE, IGNF…IVMF, and LLVL…SVTM. The active-site 4-aspartylphosphate intermediate is D329. Positions 588 and 592 each coordinate Mg(2+). The next 6 helical transmembrane spans lie at 647 to 667, 671 to 691, 709 to 729, 752 to 772, 785 to 805, and 814 to 834; these read IYAV…ALIW, FSPF…MTIS, IFAT…IFFW, EMMS…IFVT, LLLV…AVYA, and GIGW…YFPL.

This sequence belongs to the cation transport ATPase (P-type) (TC 3.A.3) family. Type IIIA subfamily.

The protein localises to the cell membrane. It carries out the reaction ATP + H2O + H(+)(in) = ADP + phosphate + 2 H(+)(out). Functionally, the plasma membrane ATPase of plants and fungi is a hydrogen ion pump. The proton gradient it generates drives the active transport of nutrients by H(+)-symport. The resulting external acidification and/or internal alkinization may mediate growth responses. This Oryza sativa subsp. japonica (Rice) protein is Plasma membrane ATPase.